The chain runs to 723 residues: Threonine--tRNA ligase, mitochondrial (723 aa).

Phosphoserine is present on Ser-57. In terms of domain architecture, TGS spans 64 to 126 (RTIKISLPEG…ETDCHLRFLT (63 aa)).

Belongs to the class-II aminoacyl-tRNA synthetase family. In terms of assembly, homodimer.

The protein resides in the mitochondrion matrix. The catalysed reaction is tRNA(Thr) + L-threonine + ATP = L-threonyl-tRNA(Thr) + AMP + diphosphate + H(+). Functionally, catalyzes the attachment of threonine to tRNA(Thr) in a two-step reaction: threonine is first activated by ATP to form Thr-AMP and then transferred to the acceptor end of tRNA(Thr). Also edits incorrectly charged tRNA(Thr) via its editing domain. The protein is Threonine--tRNA ligase, mitochondrial (Tars2) of Rattus norvegicus (Rat).